We begin with the raw amino-acid sequence, 198 residues long: tRNA (pseudouridine(54)-N(1))-methyltransferase (198 aa).

Leu-128 is a binding site for S-adenosyl-L-methionine.

It belongs to the methyltransferase superfamily. TrmY family. As to quaternary structure, homodimer.

The protein localises to the cytoplasm. The enzyme catalyses pseudouridine(54) in tRNA + S-adenosyl-L-methionine = N(1)-methylpseudouridine(54) in tRNA + S-adenosyl-L-homocysteine + H(+). Functionally, specifically catalyzes the N1-methylation of pseudouridine at position 54 (Psi54) in tRNAs. This is tRNA (pseudouridine(54)-N(1))-methyltransferase from Haloarcula marismortui (strain ATCC 43049 / DSM 3752 / JCM 8966 / VKM B-1809) (Halobacterium marismortui).